The chain runs to 254 residues: D-aminoacyl-tRNA deacylase (254 aa).

Positions 61 to 82 (KPTLTVHTPGNLTDDNSHGGNP) are disordered. Residues 65-74 (TVHTPGNLTD) show a composition bias toward polar residues.

Belongs to the DtdA deacylase family. In terms of assembly, monomer. It depends on Zn(2+) as a cofactor.

It carries out the reaction a D-aminoacyl-tRNA + H2O = a tRNA + a D-alpha-amino acid + H(+). It catalyses the reaction glycyl-tRNA(Ala) + H2O = tRNA(Ala) + glycine + H(+). Its function is as follows. D-aminoacyl-tRNA deacylase with broad substrate specificity. By recycling D-aminoacyl-tRNA to D-amino acids and free tRNA molecules, this enzyme counteracts the toxicity associated with the formation of D-aminoacyl-tRNA entities in vivo. In Methanococcus maripaludis (strain DSM 14266 / JCM 13030 / NBRC 101832 / S2 / LL), this protein is D-aminoacyl-tRNA deacylase.